The following is a 371-amino-acid chain: 4-hydroxy-3-methylbut-2-en-1-yl diphosphate synthase (flavodoxin) (371 aa).

[4Fe-4S] cluster is bound by residues Cys268, Cys271, Cys303, and Glu310.

This sequence belongs to the IspG family. The cofactor is [4Fe-4S] cluster.

The enzyme catalyses (2E)-4-hydroxy-3-methylbut-2-enyl diphosphate + oxidized [flavodoxin] + H2O + 2 H(+) = 2-C-methyl-D-erythritol 2,4-cyclic diphosphate + reduced [flavodoxin]. Its pathway is isoprenoid biosynthesis; isopentenyl diphosphate biosynthesis via DXP pathway; isopentenyl diphosphate from 1-deoxy-D-xylulose 5-phosphate: step 5/6. Functionally, converts 2C-methyl-D-erythritol 2,4-cyclodiphosphate (ME-2,4cPP) into 1-hydroxy-2-methyl-2-(E)-butenyl 4-diphosphate. This chain is 4-hydroxy-3-methylbut-2-en-1-yl diphosphate synthase (flavodoxin), found in Macrococcus caseolyticus (strain JCSC5402) (Macrococcoides caseolyticum).